Consider the following 450-residue polypeptide: Signal recognition particle 54 kDa protein (450 aa).

GTP is bound by residues 107–114, 188–192, and 247–250; these read GIQGSGKT, DTAGR, and TKLD.

The protein belongs to the GTP-binding SRP family. SRP54 subfamily. As to quaternary structure, part of the signal recognition particle protein translocation system, which is composed of SRP and FtsY. Archaeal SRP consists of a 7S RNA molecule of 300 nucleotides and two protein subunits: SRP54 and SRP19.

The protein resides in the cytoplasm. It carries out the reaction GTP + H2O = GDP + phosphate + H(+). Functionally, involved in targeting and insertion of nascent membrane proteins into the cytoplasmic membrane. Binds to the hydrophobic signal sequence of the ribosome-nascent chain (RNC) as it emerges from the ribosomes. The SRP-RNC complex is then targeted to the cytoplasmic membrane where it interacts with the SRP receptor FtsY. This is Signal recognition particle 54 kDa protein from Methanococcus maripaludis (strain C6 / ATCC BAA-1332).